Consider the following 369-residue polypeptide: Phosphate acyltransferase (369 aa).

It belongs to the PlsX family. Homodimer. Probably interacts with PlsY.

It is found in the cytoplasm. The catalysed reaction is a fatty acyl-[ACP] + phosphate = an acyl phosphate + holo-[ACP]. It functions in the pathway lipid metabolism; phospholipid metabolism. In terms of biological role, catalyzes the reversible formation of acyl-phosphate (acyl-PO(4)) from acyl-[acyl-carrier-protein] (acyl-ACP). This enzyme utilizes acyl-ACP as fatty acyl donor, but not acyl-CoA. The chain is Phosphate acyltransferase from Gluconobacter oxydans (strain 621H) (Gluconobacter suboxydans).